Here is a 198-residue protein sequence, read N- to C-terminus: Penicillin-binding protein activator LpoB (198 aa).

The signal sequence occupies residues 1-20 (MSWIRIRRSGVLLLALVLSG). The N-palmitoyl cysteine moiety is linked to residue cysteine 21. A lipid anchor (S-diacylglycerol cysteine) is attached at cysteine 21. The tract at residues 28 to 62 (PQPAAPVEPVTPPVNVPQPPKAEPGQNVPPPPKMQ) is disordered. Positions 30 to 61 (PAAPVEPVTPPVNVPQPPKAEPGQNVPPPPKM) are enriched in pro residues.

It belongs to the LpoB family. As to quaternary structure, interacts with PBP1b.

It localises to the cell outer membrane. Functionally, regulator of peptidoglycan synthesis that is essential for the function of penicillin-binding protein 1B (PBP1b). The chain is Penicillin-binding protein activator LpoB from Erwinia amylovora (strain CFBP1430).